The following is a 330-amino-acid chain: Src kinase-associated phosphoprotein 2-B (330 aa).

Positions 57 to 84 (DKAEDDDQEENDGFPLPPDAVSLASDRD) are disordered. Residues 59 to 68 (AEDDDQEEND) show a composition bias toward acidic residues. The PH domain maps to 105–208 (EYLKAGYLEK…WINAIMNSRG (104 aa)). The segment at 236-261 (ELPEESEKPVTETETQKATPVPVNNT) is disordered. Residues 240-250 (ESEKPVTETET) are compositionally biased toward basic and acidic residues. Polar residues predominate over residues 251 to 261 (QKATPVPVNNT). The 62-residue stretch at 268–329 (DYANFYRGLW…PKAYIIEMYD (62 aa)) folds into the SH3 domain.

This sequence belongs to the SKAP family. Post-translationally, phosphorylated on tyrosines.

It localises to the cytoplasm. Its function is as follows. May be involved in B-cell and macrophage adhesion processes. May play a role in src signaling pathway. In Xenopus laevis (African clawed frog), this protein is Src kinase-associated phosphoprotein 2-B (skap2-b).